The following is a 121-amino-acid chain: MAQTVVLKVGMSCQGCVGAVNRVLGKMEGVESFDIDIKEQKVTVKGNVEPEAVFQTVSKTGKKTSYWPVEAEAEPKAEADPKVETVTETKTEAETKTEAKVDAKADVEPKAAEAETKPSQV.

At Ala2 the chain carries N-acetylalanine. The HMA domain maps to 2–65; the sequence is AQTVVLKVGM…TVSKTGKKTS (64 aa). Cu cation is bound by residues Cys13 and Cys16. Residues 70–121 form a disordered region; that stretch reads EAEAEPKAEADPKVETVTETKTEAETKTEAKVDAKADVEPKAAEAETKPSQV. Basic and acidic residues predominate over residues 73–121; that stretch reads AEPKAEADPKVETVTETKTEAETKTEAKVDAKADVEPKAAEAETKPSQV.

Belongs to the ATX1 family. Cu cation serves as cofactor. Expressed in phloem (at protein level).

Functionally, involved in copper homeostasis. Can complement the yeast mutants atx1 and sod1. This Arabidopsis thaliana (Mouse-ear cress) protein is Copper transport protein CCH (CCH).